We begin with the raw amino-acid sequence, 95 residues long: MLFFSFFKTLVDQEVVVELKNDIEIKGTLQSVDQFLNLKLDNISCTDEKKYPHLGSVRNIFIRGSTVRYVYLNKNMVDTNLLQDATRREVMTERK.

The region spanning 2 to 76 (LFFSFFKTLV…VRYVYLNKNM (75 aa)) is the Sm domain.

Belongs to the snRNP Sm proteins family. In terms of assembly, component of the heptameric LSM1-LSM7 complex that forms a seven-membered ring structure with a donut shape. The LSm subunits are arranged in the order LSM1, LSM2, LSM3, LSM6, LSM5, LSM7 and LSM4. Except for LSM1, where a C-terminal helix crosses the ring structure to form additional interactions with LSM3 and LSM6, each subunit interacts only with its two neighboring subunits. The LSM1-LSM7 complex interacts with PAT1; within the complex PAT1 has direct interactions with LSM2 and LSM3. The LSM1-LSM7 complex interacts with XRN1. Component of the heptameric LSM2-LSM8 complex that forms a seven-membered ring structure with a donut shape; an RNA strand can pass through the hole in the center of the ring structure. The LSm subunits are arranged in the order LSM8, LSM2, LSM3, LSM6, LSM5, LSM7 and LSM4. Interacts with U6 snRNA SNR6 and chaperone PRP24; to promote formation of the U4/U6-U5 tri-snRNP (small nuclear ribonucleoprotein) complex, the LSM2-LSM8 complex preferentially binds U6 snRNA that has been modified to contain a non-cyclic 3' phosphate. Component of the spliceosome U4/U6-U5 tri-snRNP complex composed of the U4, U6 and U5 snRNAs and at least PRP3, PRP4, PRP6, PRP8, PRP18, PRP31, PRP38, SNU13, SNU23, SNU66, SNU114, SPP381, SMB1, SMD1, SMD2, SMD3, SMX2, SMX3, LSM2, LSM3, LSM4, LSM5, LSM6, LSM7, LSM8, BRR2 and DIB1. May be found in a complex comprising LSM2-LSM7 without LSM1 or LSM8; the complex associates with pre-P RNA and snoRNA SNR5.

The protein localises to the nucleus. It is found in the nucleolus. It localises to the cytoplasm. Component of LSm protein complexes, which are involved in RNA processing and may function in a chaperone-like manner. Component of the cytoplasmic LSM1-LSM7 complex which is involved in mRNA degradation by activating the decapping step. Together with PAT1, the LSM1-LSM7 complex binds to osmotic stress-activated mRNAs to attenuate the osmotic stress response, probably by limiting ribosome access to the mRNA and consequently translation. Component of the nuclear LSM2-LSM8 complex, which is involved in spliceosome assembly. The LSM2-LSM8 complex plays a role in the biogenesis of the spliceosomal U4/U6-U5 tri-snRNP complex by accelerating PRP24-mediated annealing of U4/U6 di-snRNA. The LSM2-LSM8 complex binds U6 snRNA terminating with a non-cyclic 3' phosphate group. LSM2-LSM8 is probably also involved in degradation of nuclear pre-mRNA by targeting them for decapping. LSM2-LSM8 could be involved in processing of pre-tRNAs, pre-rRNAs and U3 snoRNA, although involvement may be indirect. In a complex that probably contains LSM2-LSM7, but not LSM1 or LSM8, associates with the precursor of the RNA component of RNase P (pre-P RNA) and may be involved in maturing pre-P RNA; the complex also associates with snoRNA SNR5. In Saccharomyces cerevisiae (strain ATCC 204508 / S288c) (Baker's yeast), this protein is LSM complex subunit LSM2 (LSM2).